We begin with the raw amino-acid sequence, 289 residues long: ATP phosphoribosyltransferase (289 aa).

Belongs to the ATP phosphoribosyltransferase family. Long subfamily. Mg(2+) is required as a cofactor.

It localises to the cytoplasm. The enzyme catalyses 1-(5-phospho-beta-D-ribosyl)-ATP + diphosphate = 5-phospho-alpha-D-ribose 1-diphosphate + ATP. It functions in the pathway amino-acid biosynthesis; L-histidine biosynthesis; L-histidine from 5-phospho-alpha-D-ribose 1-diphosphate: step 1/9. Its activity is regulated as follows. Feedback inhibited by histidine. Catalyzes the condensation of ATP and 5-phosphoribose 1-diphosphate to form N'-(5'-phosphoribosyl)-ATP (PR-ATP). Has a crucial role in the pathway because the rate of histidine biosynthesis seems to be controlled primarily by regulation of HisG enzymatic activity. In Koribacter versatilis (strain Ellin345), this protein is ATP phosphoribosyltransferase.